Here is a 268-residue protein sequence, read N- to C-terminus: Mediator of RNA polymerase II transcription subunit 18 (268 aa).

The disordered stretch occupies residues 91–112; sequence APASPVADQDAHMSGTDEKSSV. Residues 99 to 112 show a composition bias toward basic and acidic residues; that stretch reads QDAHMSGTDEKSSV.

The protein belongs to the Mediator complex subunit 18 family. Component of the Mediator complex.

Its subcellular location is the nucleus. Functionally, component of the Mediator complex, a coactivator involved in the regulated transcription of nearly all RNA polymerase II-dependent genes. Mediator functions as a bridge to convey information from gene-specific regulatory proteins to the basal RNA polymerase II transcription machinery. Mediator is recruited to promoters by direct interactions with regulatory proteins and serves as a scaffold for the assembly of a functional preinitiation complex with RNA polymerase II and the general transcription factors. In Aspergillus fumigatus (strain ATCC MYA-4609 / CBS 101355 / FGSC A1100 / Af293) (Neosartorya fumigata), this protein is Mediator of RNA polymerase II transcription subunit 18 (srb5).